Reading from the N-terminus, the 151-residue chain is Putative calcium-binding protein CML23 (151 aa).

EF-hand domains follow at residues 2-37 (VASD…SLGE), 39-74 (MPDE…MEAD), 84-119 (ETCR…LGTH), and 120-151 (LDVA…MMMA). The Ca(2+) site is built by D15, D17, D19, K21, E26, D52, D54, D56, and E63. Ca(2+) contacts are provided by D133, N135, D137, and E144.

Functionally, potential calcium sensor. The polypeptide is Putative calcium-binding protein CML23 (CML23) (Oryza sativa subsp. japonica (Rice)).